A 661-amino-acid polypeptide reads, in one-letter code: Transketolase (661 aa).

Residue histidine 30 participates in substrate binding. Residues histidine 70 and 118–120 (GPL) contribute to the thiamine diphosphate site. Positions 99-118 (STTPGHPEFRDTPGVEATTG) are disordered. Aspartate 159 provides a ligand contact to Mg(2+). Residues glycine 160 and asparagine 189 each contribute to the thiamine diphosphate site. Positions 189 and 191 each coordinate Mg(2+). The substrate site is built by histidine 266, arginine 357, and serine 384. Histidine 266 is a binding site for thiamine diphosphate. Glutamate 411 serves as the catalytic Proton donor. Residue phenylalanine 437 coordinates thiamine diphosphate. Residues histidine 461, aspartate 469, and arginine 520 each coordinate substrate.

This sequence belongs to the transketolase family. In terms of assembly, homodimer. Mg(2+) is required as a cofactor. Requires Ca(2+) as cofactor. It depends on Mn(2+) as a cofactor. Co(2+) serves as cofactor. The cofactor is thiamine diphosphate.

It catalyses the reaction D-sedoheptulose 7-phosphate + D-glyceraldehyde 3-phosphate = aldehydo-D-ribose 5-phosphate + D-xylulose 5-phosphate. In terms of biological role, catalyzes the transfer of a two-carbon ketol group from a ketose donor to an aldose acceptor, via a covalent intermediate with the cofactor thiamine pyrophosphate. The sequence is that of Transketolase (tkt) from Physarum polycephalum (Slime mold).